Consider the following 273-residue polypeptide: Small ribosomal subunit protein uS3 (273 aa).

The 71-residue stretch at Ile40–Gly110 folds into the KH type-2 domain. Residues Gln244–Thr265 are compositionally biased toward polar residues. A disordered region spans residues Gln244–Gln273.

The protein belongs to the universal ribosomal protein uS3 family. Part of the 30S ribosomal subunit. Forms a tight complex with proteins S10 and S14.

Binds the lower part of the 30S subunit head. Binds mRNA in the 70S ribosome, positioning it for translation. The chain is Small ribosomal subunit protein uS3 from Mycoplasma pneumoniae (strain ATCC 29342 / M129 / Subtype 1) (Mycoplasmoides pneumoniae).